Here is a 149-residue protein sequence, read N- to C-terminus: Transcription antitermination protein NusB (149 aa).

The protein belongs to the NusB family.

In terms of biological role, involved in transcription antitermination. Required for transcription of ribosomal RNA (rRNA) genes. Binds specifically to the boxA antiterminator sequence of the ribosomal RNA (rrn) operons. The chain is Transcription antitermination protein NusB from Sphingopyxis alaskensis (strain DSM 13593 / LMG 18877 / RB2256) (Sphingomonas alaskensis).